Reading from the N-terminus, the 416-residue chain is 3-isopropylmalate dehydratase large subunit (416 aa).

Residues Cys299, Cys357, and Cys360 each coordinate [4Fe-4S] cluster.

Belongs to the aconitase/IPM isomerase family. LeuC type 2 subfamily. Heterodimer of LeuC and LeuD. The cofactor is [4Fe-4S] cluster.

It carries out the reaction (2R,3S)-3-isopropylmalate = (2S)-2-isopropylmalate. It participates in amino-acid biosynthesis; L-leucine biosynthesis; L-leucine from 3-methyl-2-oxobutanoate: step 2/4. In terms of biological role, catalyzes the isomerization between 2-isopropylmalate and 3-isopropylmalate, via the formation of 2-isopropylmaleate. This Saccharolobus solfataricus (strain ATCC 35092 / DSM 1617 / JCM 11322 / P2) (Sulfolobus solfataricus) protein is 3-isopropylmalate dehydratase large subunit.